A 359-amino-acid chain; its full sequence is Peptide methionine sulfoxide reductase MsrA/MsrB (359 aa).

A peptide methionine sulfoxide reductase A region spans residues 36-189; it reads RVIYLAGGCF…PGGYCHIDLK (154 aa). Residue cysteine 44 is part of the active site. In terms of domain architecture, MsrB spans 206 to 329; it reads DEVLKKKLTK…NSAALRFIPL (124 aa). Cysteine 318 serves as the catalytic Nucleophile.

It in the N-terminal section; belongs to the MsrA Met sulfoxide reductase family. This sequence in the C-terminal section; belongs to the MsrB Met sulfoxide reductase family.

It carries out the reaction L-methionyl-[protein] + [thioredoxin]-disulfide + H2O = L-methionyl-(S)-S-oxide-[protein] + [thioredoxin]-dithiol. It catalyses the reaction [thioredoxin]-disulfide + L-methionine + H2O = L-methionine (S)-S-oxide + [thioredoxin]-dithiol. The catalysed reaction is L-methionyl-[protein] + [thioredoxin]-disulfide + H2O = L-methionyl-(R)-S-oxide-[protein] + [thioredoxin]-dithiol. Has an important function as a repair enzyme for proteins that have been inactivated by oxidation. Catalyzes the reversible oxidation-reduction of methionine sulfoxide in proteins to methionine. This Helicobacter pylori (strain J99 / ATCC 700824) (Campylobacter pylori J99) protein is Peptide methionine sulfoxide reductase MsrA/MsrB (msrAB).